Consider the following 275-residue polypeptide: Ceramide synthase (275 aa).

Residues 34-261 form the TLC domain; sequence ADAVIVSARL…ICRGACRLFR (228 aa). The next 4 helical transmembrane spans lie at 130–150, 159–179, 194–214, and 232–252; these read FLMV…SVVW, LGCM…KILI, ALML…LYWA, and AHVN…FFLI.

In terms of tissue distribution, each isoform has a distinct expression pattern. Isoform 1 is highly expressed in brain. Isoform 2 is expressed at low levels, if any, in all analyzed tissues, with slightly higher levels in testis. Isoform 3 is expressed at very high levels in testis and, at lower levels, in white adipose tissue. In epididymal fat, isoform 3 is expressed at higher levels in obese mice compared with lean mice. By contrast, isoform 1 and 2 levels are significantly lower in obese mice compared with lean mice.

The protein localises to the golgi apparatus membrane. It localises to the endoplasmic reticulum membrane. The catalysed reaction is sphing-4-enine + octadecanoyl-CoA = N-octadecanoylsphing-4-enine + CoA + H(+). It catalyses the reaction eicosanoyl-CoA + sphing-4-enine = N-eicosanoyl-sphing-4-enine + CoA + H(+). It carries out the reaction sphing-4-enine + hexadecanoyl-CoA = N-hexadecanoylsphing-4-enine + CoA + H(+). Functionally, involved in ceramide synthesis. In vitro, isoform 3 stimulates the production of C16-, C18- and C20-ceramides, isoform 1 slightly increases the levels of C18- and C20-ceramides, while isoform 2 exhibits only minimal activity. May interfere with adipogenesis by stimulating ceramide synthesis. The sequence is that of Ceramide synthase (Tlcd3b) from Mus musculus (Mouse).